We begin with the raw amino-acid sequence, 249 residues long: Acetylglutamate kinase (249 aa).

Residues 42-43, R64, and N155 contribute to the substrate site; that span reads GG.

It belongs to the acetylglutamate kinase family. ArgB subfamily.

Its subcellular location is the cytoplasm. The catalysed reaction is N-acetyl-L-glutamate + ATP = N-acetyl-L-glutamyl 5-phosphate + ADP. The protein operates within amino-acid biosynthesis; L-arginine biosynthesis; N(2)-acetyl-L-ornithine from L-glutamate: step 2/4. Its function is as follows. Catalyzes the ATP-dependent phosphorylation of N-acetyl-L-glutamate. In Endomicrobium trichonymphae, this protein is Acetylglutamate kinase.